The chain runs to 181 residues: Transmembrane protein 154 (181 aa).

The first 22 residues, methionine 1–glycine 22, serve as a signal peptide directing secretion. The segment at serine 19–serine 47 is disordered. At asparagine 23–glutamate 74 the chain is on the extracellular side. Residues phenylalanine 75–isoleucine 95 traverse the membrane as a helical segment. Over alanine 96–serine 181 the chain is Cytoplasmic. The disordered stretch occupies residues arginine 103–leucine 122. The segment covering glutamate 107–glutamine 118 has biased composition (polar residues). At tyrosine 160 the chain carries Phosphotyrosine. The segment at glutamate 161–serine 181 is disordered. Serine 177 carries the phosphoserine modification.

It is found in the membrane. The chain is Transmembrane protein 154 (Tmem154) from Mus musculus (Mouse).